The primary structure comprises 252 residues: ATP-dependent L-serine kinase (252 aa).

Residue Glu35 is part of the active site. An O-phospho-L-serine-binding site is contributed by Val73. Asp74 serves as a coordination point for Mg(2+). O-phospho-L-serine contacts are provided by Gly75, His76, His77, Trp107, Lys231, Thr233, and His235.

Belongs to the SerK family. As to quaternary structure, monomer. Requires Mg(2+) as cofactor.

It catalyses the reaction L-serine + ATP = O-phospho-L-serine + ADP + H(+). In terms of biological role, free serine kinase that uses ATP to phosphorylate L-serine to yield O-phospho-L-serine and ADP. Can use ATP, UTP, CTP, GTP and the inorganic polyphosphates triphosphate and tetraphosphate as phosphate donors, with a preference for nucleoside 5'-triphosphates, but cannot use ADP. The catalytic efficiency is highest for ATP. Is specific for L-serine and cannot phosphorylate structurally similar compounds such as D-serine, L-threonine, L-homoserine, hydroxypyruvate, 3-hydroxypropionate and DL-glycerate. Likely contributes to serine metabolism, including cysteine biosynthesis. This is ATP-dependent L-serine kinase from Staphylothermus marinus (strain ATCC 43588 / DSM 3639 / JCM 9404 / F1).